The following is a 283-amino-acid chain: Large ribosomal subunit protein mL46 (283 aa).

Lys217 is modified (N6-succinyllysine). Residue Lys228 is modified to N6-acetyllysine. Lys246 is modified (N6-succinyllysine).

It belongs to the mitochondrion-specific ribosomal protein mL46 family. In terms of assembly, component of the mitochondrial ribosome large subunit (39S) which comprises a 16S rRNA and about 50 distinct proteins.

Its subcellular location is the mitochondrion. This Mus musculus (Mouse) protein is Large ribosomal subunit protein mL46 (Mrpl46).